The following is a 335-amino-acid chain: Holliday junction branch migration complex subunit RuvB (335 aa).

The large ATPase domain (RuvB-L) stretch occupies residues 1-181 (MDRIVEIEKY…FGMQFRLEFY (181 aa)). An ATP-binding site is contributed by Leu-20. ADP-binding residues include Arg-21, Tyr-28, Ile-29, Gly-62, Leu-63, Gly-64, Lys-65, Thr-66, and Thr-67. ATP contacts are provided by residues 128-130 (EDY) and Arg-171. The ADP site is built by Tyr-181 and Arg-218. The segment at 182–252 (KDSELALILQ…RANEALNSLG (71 aa)) is small ATPAse domain (RuvB-S). Residues 255–335 (ELGFDAMDLR…LNYEKTLFEE (81 aa)) are head domain (RuvB-H). DNA contacts are provided by Arg-309 and Arg-314.

The protein belongs to the RuvB family. Homohexamer. Forms an RuvA(8)-RuvB(12)-Holliday junction (HJ) complex. HJ DNA is sandwiched between 2 RuvA tetramers; dsDNA enters through RuvA and exits via RuvB. An RuvB hexamer assembles on each DNA strand where it exits the tetramer. Each RuvB hexamer is contacted by two RuvA subunits (via domain III) on 2 adjacent RuvB subunits; this complex drives branch migration. In the full resolvosome a probable DNA-RuvA(4)-RuvB(12)-RuvC(2) complex forms which resolves the HJ.

Its subcellular location is the cytoplasm. The catalysed reaction is ATP + H2O = ADP + phosphate + H(+). The RuvA-RuvB-RuvC complex processes Holliday junction (HJ) DNA during genetic recombination and DNA repair, while the RuvA-RuvB complex plays an important role in the rescue of blocked DNA replication forks via replication fork reversal (RFR). RuvA specifically binds to HJ cruciform DNA, conferring on it an open structure. The RuvB hexamer acts as an ATP-dependent pump, pulling dsDNA into and through the RuvAB complex. RuvB forms 2 homohexamers on either side of HJ DNA bound by 1 or 2 RuvA tetramers; 4 subunits per hexamer contact DNA at a time. Coordinated motions by a converter formed by DNA-disengaged RuvB subunits stimulates ATP hydrolysis and nucleotide exchange. Immobilization of the converter enables RuvB to convert the ATP-contained energy into a lever motion, pulling 2 nucleotides of DNA out of the RuvA tetramer per ATP hydrolyzed, thus driving DNA branch migration. The RuvB motors rotate together with the DNA substrate, which together with the progressing nucleotide cycle form the mechanistic basis for DNA recombination by continuous HJ branch migration. Branch migration allows RuvC to scan DNA until it finds its consensus sequence, where it cleaves and resolves cruciform DNA. This chain is Holliday junction branch migration complex subunit RuvB, found in Campylobacter jejuni subsp. jejuni serotype O:2 (strain ATCC 700819 / NCTC 11168).